Reading from the N-terminus, the 75-residue chain is MNKFKRSSRRRLPPIRSGEIIDYKNTSLLRRFISEQGKILSRRMNKLTSKQQRLVTVAIKRARILALLPFLNNES.

It belongs to the bacterial ribosomal protein bS18 family. As to quaternary structure, part of the 30S ribosomal subunit.

It is found in the plastid. Its subcellular location is the chloroplast. This chain is Small ribosomal subunit protein bS18c (rps18), found in Anthoceros angustus (Hornwort).